Consider the following 915-residue polypeptide: Translation initiation factor IF-2 (915 aa).

The span at 83 to 94 (QSRRAVEKEQIL) shows a compositional bias: basic and acidic residues. Disordered stretches follow at residues 83-177 (QSRR…PEPP), 216-280 (EADR…KPAV), and 293-328 (ISGM…LLRE). Composition is skewed to low complexity over residues 111 to 129 (VRAA…EAPS) and 137 to 164 (APAT…LSAP). Over residues 165-177 (LPEPVPEPVPEPP) the composition is skewed to pro residues. The span at 293-305 (ISGMDDSSGTGSR) shows a compositional bias: polar residues. Over residues 314-328 (MEREREQEEADLLRE) the composition is skewed to basic and acidic residues. The 171-residue stretch at 412 to 582 (TRPPVVTIMG…LTEAEMRELK (171 aa)) folds into the tr-type G domain. The segment at 421–428 (GHVDHGKT) is G1. 421 to 428 (GHVDHGKT) lines the GTP pocket. A G2 region spans residues 446–450 (GITQH). The G3 stretch occupies residues 468 to 471 (DTPG). Residues 468-472 (DTPGH) and 522-525 (NKMD) contribute to the GTP site. The interval 522–525 (NKMD) is G4. The segment at 558–560 (SAK) is G5.

This sequence belongs to the TRAFAC class translation factor GTPase superfamily. Classic translation factor GTPase family. IF-2 subfamily.

Its subcellular location is the cytoplasm. One of the essential components for the initiation of protein synthesis. Protects formylmethionyl-tRNA from spontaneous hydrolysis and promotes its binding to the 30S ribosomal subunits. Also involved in the hydrolysis of GTP during the formation of the 70S ribosomal complex. The chain is Translation initiation factor IF-2 from Chlorobium luteolum (strain DSM 273 / BCRC 81028 / 2530) (Pelodictyon luteolum).